The chain runs to 507 residues: MEDPRRRTTAPRAKKPSAKRAPTQPSRTRAHAESCGPQRGARSRRAERDGDTTEKPRAPGPRVHPARATELTKDAQPSAMDAAGATARPAVRVPQQQAILDPELPAVREPQPPADPEARKVVRGPSHRRGARSTGQPRAPRGSRKEPDKLKKVLDKLRLKRKDISEAAETVNKVVERLLRRMQKRESEFKGVEQLNTGSYYEHVKISAPNEFDVMFKLEVPRIELQEYYETGAFYLVKFKRIPRGNPLSHFLEGEVLSATKMLSKFRKIIKEEVKEIKDIDVSVEKEKPGSPAVTLLIRNPEEISVDIILALESKGSWPISTKEGLPIQGWLGTKVRTNLRREPFYLVPKNAKDGNSFQGETWRLSFSHTEKYILNNHGIEKTCCESSGAKCCRKECLKLMKYLLEQLKKEFQELDAFCSYHVKTAIFHMWTQDPQDSQWDPRNLSSCFDKLLAFFLECLRTEKLDHYFIPKFNLFSQELIDRKSKEFLSKKIEYERNNGFPIFDKL.

A DNA-binding region spans residues 1-146 (MEDPRRRTTA…PRAPRGSRKE (146 aa)). The tract at residues 1 to 151 (MEDPRRRTTA…GSRKEPDKLK (151 aa)) is disordered. The segment covering 7-18 (RTTAPRAKKPSA) has biased composition (basic residues). Residues 44–57 (RRAERDGDTTEKPR) are compositionally biased toward basic and acidic residues. Positions 48-59 (RDGDTTEKPRAP) are required for association with the cell membrane. Thr-52 is subject to Phosphothreonine. The required for activation upon DNA viral infection stretch occupies residues 119–132 (RKVVRGPSHRRGAR). Residues 121-131 (VVRGPSHRRGA) are compositionally biased toward basic residues. Positions 154–159 (LDKLRL) match the Nuclear export signal motif. Lys-156 is modified (N6-lactoyllysine). The tract at residues 158 to 201 (RLKRKDISEAAETVNKVVERLLRRMQKRESEFKGVEQLNTGSYY) is DNA-binding. Glu-176 is subject to PolyADP-ribosyl glutamic acid. Thr-197 lines the GTP pocket. Residue Ser-199 coordinates ATP. Ser-199 is modified (phosphoserine). At Tyr-201 the chain carries Phosphotyrosine. The Mg(2+) site is built by Glu-211 and Asp-213. Asp-213 serves as a coordination point for 2',3'-cGAMP. Lys-217 participates in a covalent cross-link: Glycyl lysine isopeptide (Lys-Gly) (interchain with G-Cter in SUMO). A Glycyl lysine isopeptide (Lys-Gly) (interchain with G-Cter in ubiquitin) cross-link involves residue Lys-271. Residue Glu-272 is modified to 5-glutamyl polyglutamate. The short motif at 281–291 (DVSVEKEKPGS) is the Nuclear localization signal element. Position 290 (Gly-290) interacts with 2',3'-cGAMP. Position 291 is a phosphoserine; by CDK1 and PKB (Ser-291). The residue at position 302 (Glu-302) is a 5-glutamyl glutamate. GTP is bound at residue Asp-307. Asp-307 contacts Mg(2+). Asp-307 contributes to the 2',3'-cGAMP binding site. Residues 329–370 (QGWLGTKVRTNLRREPFYLVPKNAKDGNSFQGETWRLSFSHT) form an interaction with collided ribosomes region. Residue Lys-335 forms a Glycyl lysine isopeptide (Lys-Gly) (interchain with G-Cter in SUMO); alternate linkage. Residue Lys-335 forms a Glycyl lysine isopeptide (Lys-Gly) (interchain with G-Cter in ubiquitin); alternate linkage. 2',3'-cGAMP-binding positions include Lys-350 and 364 to 366 (RLS). 364 to 371 (RLSFSHTE) is a binding site for GTP. Glu-371 serves as a coordination point for ATP. Residue Lys-372 forms a Glycyl lysine isopeptide (Lys-Gly) (interchain with G-Cter in SUMO); alternate linkage. Residue Lys-372 forms a Glycyl lysine isopeptide (Lys-Gly) (interchain with G-Cter in ubiquitin); alternate linkage. Lys-372 carries the post-translational modification N6-acetyllysine. The interval 372–395 (KYILNNHGIEKTCCESSGAKCCRK) is DNA-binding. Position 378 (His-378) interacts with Zn(2+). Residue Lys-382 forms a Glycyl lysine isopeptide (Lys-Gly) (interchain with G-Cter in SUMO) linkage. The residue at position 382 (Lys-382) is an N6-acetyllysine. 3 residues coordinate Zn(2+): Cys-384, Cys-385, and Cys-392. S-palmitoyl cysteine attachment occurs at residues Cys-392 and Cys-393. Glycyl lysine isopeptide (Lys-Gly) (interchain with G-Cter in ubiquitin) cross-links involve residues Lys-399, Lys-402, Lys-409, and Lys-410. Lys-402 lines the ATP pocket. Lys-402 is subject to N6-acetyllysine. A Phosphoserine modification is found at Ser-420. Residue 420-424 (SYHVK) participates in ATP binding. Cys-459 carries the S-palmitoyl cysteine lipid modification. A Glycyl lysine isopeptide (Lys-Gly) (interchain with G-Cter in SUMO); alternate cross-link involves residue Lys-464. Residue Lys-464 forms a Glycyl lysine isopeptide (Lys-Gly) (interchain with G-Cter in ubiquitin); alternate linkage. Residue Lys-491 is modified to N6-methyllysine.

Belongs to the mab-21 family. Monomer in the absence of DNA. Homodimer in presence of dsDNA: forms a 2:2 dimer with two enzymes binding to two DNA molecules. Interacts with nucleosomes; interaction is mainly mediated via histones H2A and H2B and inactivates the nucleotidyltransferase activity by blocking DNA-binding and subsequent activation. Interacts with PQBP1 (via WW domain). Interacts with TRIM14; this interaction recruits USP14, leading to deubiquitinate and stabilize CGAS and promote type I interferon production. Interacts with ZCCHC3; promoting sensing of dsDNA by CGAS. Interacts (when not monomethylated) with (poly-ADP-ribosylated) PARP1; interaction takes place in the nucleus and prevents the formation of the PARP1-TIMELESS complex. Interacts (when monomethylated) with SGF29; interaction with SGF29 prevents interaction with PARP1. Interacts with PCBP2; preventing the formation of liquid-like droplets in which CGAS is activated. Interacts with Irgm1; promoting CGAS degradation. Interacts with DDX41. Requires Mg(2+) as cofactor. Mn(2+) serves as cofactor. It depends on Zn(2+) as a cofactor. Post-translationally, the N-terminal disordered part (1-146) is phosphorylated by AURKB during the G2-M transition, blocking CGAS liquid phase separation and preventing activation. Phosphorylation at Tyr-201 by BLK promotes cytosolic retention. Localizes into the nucleus following dephosphorylation at Tyr-201. Phosphorylation at Ser-420 activates the nucleotidyltransferase activity. Dephosphorylation at Ser-420 by PPP6C impairs its ability to bind GTP, thereby inactivating it. Phosphorylation at Thr-52 and Ser-199 by PRKDC inhibits its cyclic GMP-AMP synthase activity by impairing homodimerization and activation. Phosphorylation at Ser-291 by AKT (AKT1, AKT2 or AKT3) suppresses the nucleotidyltransferase activity. Phosphorylation at Ser-291 by CDK1 during mitosis leads to its inhibition, thereby preventing CGAS activation by self-DNA during mitosis. Dephosphorylated at Ser-291 by protein phosphatase PP1 upon mitotic exit. In terms of processing, ubiquitinated at Lys-402 via 'Lys-48'-linked polyubiquitin chains, leading to its SQSTM1-mediated autophagic degradation. Interaction with TRIM14 promotes recruitment of USP14, leading to deubiquitinate Lys-402 and stabilize CGAS. Ubiquitinated at Lys-372 by RNF185 via 'Lys-27'-linked polyubiquitination, promoting CGAS cyclic GMP-AMP synthase activity. Monoubiquitination at Lys-335 by TRIM56 promotes oligomerization and subsequent activation. Monoubiquitination by TRIM41 promotes CGAS activation. Ubiquitination at Lys-271 and Lys-464 via 'Lys-48'-linked polyubiquitination promotes its degradation. Deubiquitination at Lys-271 by USP29 promotes its stabilization. Deubiquitinated by USP27X, promoting its stabilization. Ubiquitinated at Lys-399 via 'Lys-63'-linked polyubiquitin chains by MARCHF8, leading to the inhibition of its DNA binding ability. In cycling cells, nucleosome-bound CGAS is ubiquitinated at Lys-409 and Lys-410 via 'Lys-48'-linked polyubiquitin chains by the ECS(SPSB3) complex, leading to its degradation: ubiquitination and degradation of nuclear CGAS during G1 and G2 phases is required to promote low intranuclear CGAS abundance before the next mitotic cycle. Sumoylated at Lys-217 and Lys-464 by TRIM38 in uninfected cells and during the early phase of viral infection, promoting its stability by preventing ubiquitination at Lys-271 and Lys-464, and subsequent degradation. Desumoylated by SENP2 during the late phase of viral infection. Sumoylation at Lys-335, Lys-372 and Lys-382 prevents DNA-binding, oligomerization and nucleotidyltransferase activity. Desumoylation at Lys-335, Lys-372 and Lys-382 by SENP7 relieves inhibition and activates CGAS. Post-translationally, polyglutamylated by TTLL6 at Glu-272, leading to impair DNA-binding activity. Monoglutamylated at Glu-302 by TTLL4, leading to impair the nucleotidyltransferase activity. Deglutamylated by AGBL5/CCP5 and AGBL6/CCP6. In terms of processing, acetylation at Lys-372, Lys-382 and Lys-402 inhibits the cyclic GMP-AMP synthase activity. Deacetylated upon cytosolic DNA challenge such as viral infections. Acetylation by KAT5 increases the cyclic GMP-AMP synthase activity by promoting DNA-binding and subsequent activation. Proteolytically cleaved by apoptotic caspases during apoptosis, leading to its inactivation. The damage of the nucleus and the mitochondria during apoptosis leads to leakage of nuclear and mitochondrial DNA, which activate CGAS: cleavage and inactivation during apoptosis in required to prevent cytokine overproduction. Cleaved by CASP7 and CASP3 during virus-induced apoptosis, thereby inactivating it and preventing cytokine overproduction. Cleaved by CASP1 upon DNA virus infection; the cleavage impairs cGAMP production. Also cleaved by the pyroptotic CASP4 during non-canonical inflammasome activation; does not cut at the same sites than CASP1. Post-translationally, degraded via selective autophagy following interaction with Irgm1. Irgm1 promotes CGAS recruitment to autophagosome membranes, promoting its SQSTM1/p62-dependent autophagic degradation. In terms of processing, poly-ADP-ribosylation at Glu-176 by PARP1 impairs DNA-binding, thereby preventing the cyclic GMP-AMP synthase activity. Palmitoylation at Cys-459 by ZDHHC18 impairs DNA-binding, thereby preventing the cyclic GMP-AMP synthase activity. Palmitoylation at Cys-392 and Cys-393 by ZDHHC9 promotes homodimerization and cyclic GMP-AMP synthase activity. Depalmitoylation at Cys-392 and Cys-393 by LYPLAL1 impairs homodimerization and cyclic GMP-AMP synthase activity. Post-translationally, monomethylated at Lys-491 by SETD7. Monomethylation promotes interaction with SGF29, preventing interaction between PARP1 nad SGF29. Demethylation by RIOX1 promotes interaction with PARP1, followed by PARP1 inactivation. In terms of processing, lactylation by AARS2 prevents ability to undergo liquid-liquid phase separation (LLPS), thereby inhibiting CGAS activation.

It is found in the nucleus. Its subcellular location is the chromosome. The protein resides in the cell membrane. It localises to the cytoplasm. The protein localises to the cytosol. It catalyses the reaction GTP + ATP = 2',3'-cGAMP + 2 diphosphate. It carries out the reaction GTP + ATP = pppGp(2'-5')A + diphosphate. The catalysed reaction is pppGp(2'-5')A = 2',3'-cGAMP + diphosphate. With respect to regulation, the enzyme activity is strongly increased by double-stranded DNA (dsDNA), but not by single-stranded DNA or RNA. DNA-binding induces the formation of liquid-like droplets in which CGAS is activated. Liquid-like droplets also create a selective environment that restricts entry of negative regulators, such as TREX1 or BANF1/BAF, allowing sensing of DNA. A number of mechanisms exist to restrict its activity toward self-DNA. The nucleotidyltransferase activity is inhibited in the nucleus via its association with nucleosomes: interacts with the acidic patch of histones H2A and H2B, thereby blocking DNA-binding and subsequent activation. CGAS is also inactive when associated with mitotic chromatin. Chromatin-bound CGAS cannot be activated by exogenous DNA in mitotic cells: phosphorylation of the N-terminal disordered part by AURKB during the G2-M transition blocks CGAS liquid phase separation and activation. Activity toward self-DNA is inhibited by BANF1/BAF upon acute loss of nuclear membrane integrity: BANF1/BAF acts by outcompeting CGAS for DNA-binding, thereby preventing CGAS activation. DNA-induced activation at micronuclei is also limited by TREX1, which degrades micronuclear DNA upon nuclear envelope rupture, thereby preventing CGAS activation. CGAS can be released from nucleosomes and activated by MRE11 component of the MRN complex, which displaces CGAS from acidic-patch-mediated sequestration. Acetylation at Lys-372, Lys-382 and Lys-402 inhibits the cyclic GMP-AMP synthase activity. Acetylation by KAT5 increases the cyclic GMP-AMP synthase activity by promoting DNA-binding and subsequent activation. Phosphorylation at Ser-291 suppresses the nucleotidyltransferase activity. Phosphorylation at Ser-420 promotes the cyclic GMP-AMP synthase activity. Phosphorylation at Thr-52 and Ser-199 inhibits its cyclic GMP-AMP synthase activity. Ubiquitination at Lys-372 via 'Lys-27'-linked polyubiquitination enhances the cyclic GMP-AMP synthase activity. Monoubiquitination at Lys-335 promotes oligomerization and subsequent activation. Sumoylation at Lys-335, Lys-372 and Lys-382 prevents DNA-binding, oligomerization and nucleotidyltransferase activity. The enzyme activity is impaired by the cleavage by CASP1. In addition to DNA, also activated by collided ribosomes upon translation stress: specifically binds collided ribosomes, promoting its activation and triggering type-I interferon production. In hematopoietic stem cells, binding to circular RNA cia-cGAS inhibits the cyclic GMP-AMP synthase activity. Strongly inhibited by compound RU.521, which is specific for mouse protein. In terms of biological role, nucleotidyltransferase that catalyzes the formation of cyclic GMP-AMP (2',3'-cGAMP) from ATP and GTP and plays a key role in innate immunity. Catalysis involves both the formation of a 2',5' phosphodiester linkage at the GpA step and the formation of a 3',5' phosphodiester linkage at the ApG step, producing c[G(2',5')pA(3',5')p]. Acts as a key DNA sensor: directly binds double-stranded DNA (dsDNA), inducing the formation of liquid-like droplets in which CGAS is activated, leading to synthesis of 2',3'-cGAMP, a second messenger that binds to and activates STING1, thereby triggering type-I interferon production. Preferentially binds long dsDNA (around 45 bp) and forms ladder-like networks that function cooperatively to stabilize individual cGAS-dsDNA complexes. Acts as a key foreign DNA sensor, the presence of double-stranded DNA (dsDNA) in the cytoplasm being a danger signal that triggers the immune responses. Has antiviral activity by sensing the presence of dsDNA from DNA viruses in the cytoplasm. Also acts as an innate immune sensor of infection by retroviruses by detecting the presence of reverse-transcribed DNA in the cytosol. Detection of retroviral reverse-transcribed DNA in the cytosol may be indirect and be mediated via interaction with PQBP1, which directly binds reverse-transcribed retroviral DNA. Also detects the presence of DNA from bacteria. 2',3'-cGAMP can be transferred from producing cells to neighboring cells through gap junctions, leading to promote STING1 activation and convey immune response to connecting cells. 2',3'-cGAMP can also be transferred between cells by virtue of packaging within viral particles contributing to IFN-induction in newly infected cells in a cGAS-independent but STING1-dependent manner. Also senses the presence of neutrophil extracellular traps (NETs) that are translocated to the cytosol following phagocytosis, leading to synthesis of 2',3'-cGAMP. In addition to foreign DNA, can also be activated by endogenous nuclear or mitochondrial DNA. When self-DNA leaks into the cytosol during cellular stress (such as mitochondrial stress, DNA damage, mitotic arrest or senescence), or is present in form of cytosolic micronuclei, CGAS is activated leading to a state of sterile inflammation. Acts as a regulator of cellular senescence by binding to cytosolic chromatin fragments that are present in senescent cells, leading to trigger type-I interferon production via STING1 and promote cellular senescence. Also involved in the inflammatory response to genome instability and double-stranded DNA breaks: acts by localizing to micronuclei arising from genome instability. Micronuclei, which as frequently found in cancer cells, consist of chromatin surrounded by its own nuclear membrane: following breakdown of the micronuclear envelope, a process associated with chromothripsis, CGAS binds self-DNA exposed to the cytosol, leading to 2',3'-cGAMP synthesis and subsequent activation of STING1 and type-I interferon production. In a healthy cell, CGAS is however kept inactive even in cellular events that directly expose it to self-DNA, such as mitosis, when cGAS associates with chromatin directly after nuclear envelope breakdown or remains in the form of postmitotic persistent nuclear cGAS pools bound to chromatin. Nuclear CGAS is inactivated by chromatin via direct interaction with nucleosomes, which block CGAS from DNA binding and thus prevent CGAS-induced autoimmunity. Also acts as a suppressor of DNA repair in response to DNA damage: inhibits homologous recombination repair by interacting with PARP1, the CGAS-PARP1 interaction leading to impede the formation of the PARP1-TIMELESS complex. In addition to DNA, also sense translation stress: in response to translation stress, translocates to the cytosol and associates with collided ribosomes, promoting its activation and triggering type-I interferon production. The sequence is that of Cyclic GMP-AMP synthase from Mus musculus (Mouse).